Reading from the N-terminus, the 625-residue chain is Grainyhead-like protein 2 homolog (625 aa).

A transcription activation region spans residues 1-93 (MSQESDNNKR…KASDSQEDQD (93 aa)). 2 disordered regions span residues 198 to 222 (ASHS…SFKD) and 428 to 452 (EERK…SSDG). The region spanning 244-482 (GSGTFQYTLE…DLHSQPVLFI (239 aa)) is the Grh/CP2 DB domain. Residues 440 to 451 (QASQAQCNNSSD) are compositionally biased toward polar residues.

This sequence belongs to the grh/CP2 family. Grainyhead subfamily. Homodimer, also forms heterodimers with GRHL1 or GRHL3.

Its subcellular location is the nucleus. The protein localises to the membrane. Transcription factor playing an important role in primary neurulation and in epithelial development. Binds directly to the consensus DNA sequence 5'-AACCGGTT-3' acting as an activator and repressor on distinct target genes. During embryogenesis, plays unique and cooperative roles with GRHL3 in establishing distinct zones of primary neurulation. Essential for closure 3 (rostral end of the forebrain), functions cooperatively with GRHL3 in closure 2 (forebrain/midbrain boundary) and posterior neuropore closure. Regulates epithelial morphogenesis acting as a target gene-associated transcriptional activator of apical junctional complex components. Up-regulates of CLDN3 and CLDN4, as well as of RAB25, which increases the CLDN4 protein and its localization at tight junctions. Comprises an essential component of the transcriptional machinery that establishes appropriate expression levels of CLDN4 and CDH1 in different types of epithelia. Exhibits functional redundancy with GRHL3 in epidermal morphogenetic events such as eyelid fusion and epidermal wound repair. In lung, forms a regulatory loop with NKX2-1 that coordinates lung epithelial cell morphogenesis and differentiation. In keratinocytes, plays a role in telomerase activation during cellular proliferation, regulates TERT expression by binding to TERT promoter region and inhibiting DNA methylation at the 5'-CpG island, possibly by interfering with DNMT1 enzyme activity. In addition, impairs keratinocyte differentiation and epidermal function by inhibiting the expression of genes clustered at the epidermal differentiation complex (EDC) as well as GRHL1 and GRHL3 through epigenetic mechanisms. The sequence is that of Grainyhead-like protein 2 homolog (Grhl2) from Mus musculus (Mouse).